Consider the following 547-residue polypeptide: Chaperonin GroEL (547 aa).

ATP is bound by residues 30–33, lysine 51, 87–91, glycine 415, and aspartate 495; these read TLGP and DGTTT.

The protein belongs to the chaperonin (HSP60) family. Forms a cylinder of 14 subunits composed of two heptameric rings stacked back-to-back. Interacts with the co-chaperonin GroES.

Its subcellular location is the cytoplasm. It catalyses the reaction ATP + H2O + a folded polypeptide = ADP + phosphate + an unfolded polypeptide.. Together with its co-chaperonin GroES, plays an essential role in assisting protein folding. The GroEL-GroES system forms a nano-cage that allows encapsulation of the non-native substrate proteins and provides a physical environment optimized to promote and accelerate protein folding. In Shewanella halifaxensis (strain HAW-EB4), this protein is Chaperonin GroEL.